Reading from the N-terminus, the 370-residue chain is NADH-quinone oxidoreductase subunit D 2 (370 aa).

Belongs to the complex I 49 kDa subunit family. In terms of assembly, NDH-1 is composed of 14 different subunits. Subunits NuoB, C, D, E, F, and G constitute the peripheral sector of the complex.

It is found in the cell membrane. It carries out the reaction a quinone + NADH + 5 H(+)(in) = a quinol + NAD(+) + 4 H(+)(out). In terms of biological role, NDH-1 shuttles electrons from NADH, via FMN and iron-sulfur (Fe-S) centers, to quinones in the respiratory chain. The immediate electron acceptor for the enzyme in this species is believed to be ubiquinone. Couples the redox reaction to proton translocation (for every two electrons transferred, four hydrogen ions are translocated across the cytoplasmic membrane), and thus conserves the redox energy in a proton gradient. The sequence is that of NADH-quinone oxidoreductase subunit D 2 from Herpetosiphon aurantiacus (strain ATCC 23779 / DSM 785 / 114-95).